Here is a 393-residue protein sequence, read N- to C-terminus: Formate-dependent phosphoribosylglycinamide formyltransferase (393 aa).

N(1)-(5-phospho-beta-D-ribosyl)glycinamide contacts are provided by residues 22 to 23 (EL) and Glu-82. ATP is bound by residues Arg-114, Lys-155, 160 to 165 (SSGKGQ), 195 to 198 (EGFI), and Glu-203. The ATP-grasp domain maps to 119-308 (RLAAEELDLP…QFALHARAIL (190 aa)). Residues Glu-267 and Glu-279 each contribute to the Mg(2+) site. Residues Asp-286, Lys-356, and 363–364 (RR) each bind N(1)-(5-phospho-beta-D-ribosyl)glycinamide.

Belongs to the PurK/PurT family. In terms of assembly, homodimer.

The enzyme catalyses N(1)-(5-phospho-beta-D-ribosyl)glycinamide + formate + ATP = N(2)-formyl-N(1)-(5-phospho-beta-D-ribosyl)glycinamide + ADP + phosphate + H(+). Its pathway is purine metabolism; IMP biosynthesis via de novo pathway; N(2)-formyl-N(1)-(5-phospho-D-ribosyl)glycinamide from N(1)-(5-phospho-D-ribosyl)glycinamide (formate route): step 1/1. Functionally, involved in the de novo purine biosynthesis. Catalyzes the transfer of formate to 5-phospho-ribosyl-glycinamide (GAR), producing 5-phospho-ribosyl-N-formylglycinamide (FGAR). Formate is provided by PurU via hydrolysis of 10-formyl-tetrahydrofolate. In Pseudomonas putida (strain W619), this protein is Formate-dependent phosphoribosylglycinamide formyltransferase.